Consider the following 312-residue polypeptide: Short chain dehydrogenase pgmD (312 aa).

The NADP(+) site is built by V46, I47, K171, Y207, K211, and T242. The active-site Proton donor is the Y207. K211 (lowers pKa of active site Tyr) is an active-site residue.

It belongs to the short-chain dehydrogenases/reductases (SDR) family.

Its pathway is pigment biosynthesis. It functions in the pathway secondary metabolite biosynthesis. In terms of biological role, short chain dehydrogenase; part of the gene cluster that mediates the biosynthesis of pleosporalin A, ascomycone A, as well as a third cryptic naphthoquinone derived pigment, all responsible for the coloration of conidia. Essential for the production of pleosporalin A, but not the 2 other final products. The pathway begins with the biosynthesis of the cyclized heptaketide 3-acetonyl-1,6,8-trihydroxy-2-naphthaldehyde by the NR-PKS pgmA. The C-6 hydroxyl group is further methylated by the O-methyltransferase pgmB to yield fusarubinaldehyde which is in turn oxidized by the cytochrome P450 monooxygenase pgmC at C-9. The C-1 hydroxyl group is then methylated spontaneously. Although pgmE, pgmD and pgmH are essential for the production of pleosporalin A, it is not the case for the 2 other final products and it remains difficult to assign a specific function to each enzyme. PgmF and pgmG seem not to be involved in pigment biosynthesis although they were regulated by the cluster-specific transcription factor pgmR. This chain is Short chain dehydrogenase pgmD, found in Aspergillus terreus.